We begin with the raw amino-acid sequence, 829 residues long: Protein SEY1 (829 aa).

Over 1-721 the chain is Cytoplasmic; sequence MNQTPQIAQD…KRSMVSSVAQ (721 aa). In terms of domain architecture, GB1/RHD3-type G spans 87–310; the sequence is GFAYDVVAVF…REDYVFQPAY (224 aa). 97-104 contributes to the GTP binding site; it reads GSQSTGKS. Residues 487-525 are a coiled coil; that stretch reads EYEHELALLDEDLKLIADKCRADETKKMVNAIERNVKRQ. A helical membrane pass occupies residues 722 to 742; the sequence is IPVWMYGVLVVLGWNEAMAVL. At 743–745 the chain is on the lumenal side; the sequence is FNP. A helical transmembrane segment spans residues 746-766; that stretch reads LYFAMLLVLAASGYIILQLGL. The Cytoplasmic portion of the chain corresponds to 767–829; that stretch reads AGPILQIAST…DLIKGEMLEK (63 aa). The segment at 806-829 is disordered; the sequence is PVTASSSDEQERKGDLIKGEMLEK. Over residues 814–829 the composition is skewed to basic and acidic residues; it reads EQERKGDLIKGEMLEK.

Belongs to the TRAFAC class dynamin-like GTPase superfamily. GB1/RHD3 GTPase family. RHD3 subfamily.

The protein localises to the endoplasmic reticulum membrane. In terms of biological role, cooperates with the reticulon proteins and tubule-shaping DP1 family proteins to generate and maintain the structure of the tubular endoplasmic reticulum network. Has GTPase activity, which is required for its function in ER organization. The chain is Protein SEY1 from Cryptococcus neoformans var. neoformans serotype D (strain B-3501A) (Filobasidiella neoformans).